The chain runs to 457 residues: GTPase Era, mitochondrial (457 aa).

Residues 1 to 18 (MAFRVSISTFGKSLRVRR) constitute a mitochondrion transit peptide. The Era-type G domain occupies 107–350 (KVLRVAIIGA…RYLVVGAKPG (244 aa)). A G1 region spans residues 115-122 (GAPNAGKS). Residue 115 to 122 (GAPNAGKS) participates in GTP binding. The G2 stretch occupies residues 141-145 (HTTRA). Residues 162–165 (DTPG) are G3. Residues 162–166 (DTPGL) and 231–234 (NKVD) contribute to the GTP site. Residues 231–234 (NKVD) form a G4 region. The span at 270 to 290 (AERRTDREARTSGSGDEEKPG) shows a compositional bias: basic and acidic residues. The tract at residues 270–300 (AERRTDREARTSGSGDEEKPGGDVADGEGSE) is disordered. The interval 328–330 (VSA) is G5. Residues 376–457 (LLEYLPKEVP…KLRLSVKVKN (82 aa)) form the KH type-2 domain.

This sequence belongs to the TRAFAC class TrmE-Era-EngA-EngB-Septin-like GTPase superfamily. Era GTPase family.

The protein localises to the mitochondrion matrix. It is found in the mitochondrion inner membrane. Functionally, probable GTPase that plays a role in the mitochondrial ribosomal small subunit assembly. Specifically binds the 12S mitochondrial rRNA (12S mt-rRNA) to a 33 nucleotide section delineating the 3' terminal stem-loop region. May act as a chaperone that protects the 12S mt-rRNA on the 28S mitoribosomal subunit during ribosomal small subunit assembly. The chain is GTPase Era, mitochondrial (eral1) from Salmo salar (Atlantic salmon).